A 328-amino-acid polypeptide reads, in one-letter code: Reticulocalbin-3 (328 aa).

An N-terminal signal peptide occupies residues 1–20 (MMWRPSVLLLLLLLRHGAQG). Positions 19–49 (QGKPSPDAGPHGQGRVHQAAPLSDAPHDDAH) are disordered. 6 consecutive EF-hand domains span residues 75–112 (ESQARLGRIVDRMDRAGDGDGWVSLAELRAWIAHTQQR), 113–148 (HIRDSVSAAWDTYDTDRDGRVGWEELRNATYGHYAP), 163–198 (KMLARDERRFRVADQDGDSMATREELTAFLHPEEFP), 200–235 (MRDIVIAETLEDLDRNKDGYVQVEEYIADLYSAEPG), 241–276 (WVQTERQQFRDFRDLNKDGHLDGSEVGHWVLPPAQD), and 277–312 (QPLVEANHLLHESDTDKDGRLSKAEILGNWNMFVGS). Asp-92, Asp-94, Trp-96, Glu-101, Asp-126, Asp-128, Asp-130, Arg-132, and Glu-137 together coordinate Ca(2+). A glycan (N-linked (GlcNAc...) asparagine) is linked at Asn-140. Ca(2+) is bound by residues Asp-176, Asp-178, Asp-180, Met-182, Glu-187, Asp-213, Asn-215, Asp-217, Tyr-219, Glu-224, Asp-254, Asn-256, Asp-258, His-260, Glu-265, Asp-290, Asp-292, Asp-294, Arg-296, and Glu-301. The short motif at 325-328 (HDEL) is the Prevents secretion from ER element.

The protein belongs to the CREC family. In terms of assembly, interacts with PCSK6 (immature form including the propeptide); probably involved in the maturation and the secretion of PCSK6. Post-translationally, degraded by PCSK6 and other endoproteases including FURIN and PCSK5. N-glycosylated. In terms of tissue distribution, widely expressed.

It localises to the endoplasmic reticulum lumen. Probable molecular chaperone assisting protein biosynthesis and transport in the endoplasmic reticulum. Required for the proper biosynthesis and transport of pulmonary surfactant-associated protein A/SP-A, pulmonary surfactant-associated protein D/SP-D and the lipid transporter ABCA3. By regulating both the proper expression and the degradation through the endoplasmic reticulum-associated protein degradation pathway of these proteins plays a crucial role in pulmonary surfactant homeostasis. Has an anti-fibrotic activity by negatively regulating the secretion of type I and type III collagens. This calcium-binding protein also transiently associates with immature PCSK6 and regulates its secretion. In Homo sapiens (Human), this protein is Reticulocalbin-3.